The following is a 128-amino-acid chain: NADPH-dependent 7-cyano-7-deazaguanine reductase (128 aa).

Cys34 (thioimide intermediate) is an active-site residue. Residue Asp41 is the Proton donor of the active site. Residues 56–58 (IEL) and 75–76 (HE) contribute to the substrate site.

This sequence belongs to the GTP cyclohydrolase I family. QueF type 1 subfamily.

It is found in the cytoplasm. The enzyme catalyses 7-aminomethyl-7-carbaguanine + 2 NADP(+) = 7-cyano-7-deazaguanine + 2 NADPH + 3 H(+). The protein operates within tRNA modification; tRNA-queuosine biosynthesis. Its function is as follows. Catalyzes the NADPH-dependent reduction of 7-cyano-7-deazaguanine (preQ0) to 7-aminomethyl-7-deazaguanine (preQ1). The sequence is that of NADPH-dependent 7-cyano-7-deazaguanine reductase from Ruthia magnifica subsp. Calyptogena magnifica.